The sequence spans 166 residues: uncharacterized protein (166 aa).

117–124 is a binding site for ATP; it reads AAKSGGKT.

This is an uncharacterized protein from Mycoplasma pneumoniae (strain ATCC 29342 / M129 / Subtype 1) (Mycoplasmoides pneumoniae).